The chain runs to 503 residues: Long-chain-fatty-acid--CoA ligase FadD13 (503 aa).

This sequence belongs to the ATP-dependent AMP-binding enzyme family. As to quaternary structure, homodimer.

It is found in the cell membrane. The enzyme catalyses a long-chain fatty acid + ATP + CoA = a long-chain fatty acyl-CoA + AMP + diphosphate. It functions in the pathway lipid metabolism; fatty acid biosynthesis. In terms of biological role, required for maintaining the appropriate mycolic acid composition and permeability of the envelope on its exposure to acidic pH. Catalyzes the activation of long-chain fatty acids as acyl-coenzyme A (acyl-CoA), which are then transferred to the multifunctional polyketide synthase (PKS) type III for further chain extension. The sequence is that of Long-chain-fatty-acid--CoA ligase FadD13 (fadD13) from Mycobacterium tuberculosis (strain CDC 1551 / Oshkosh).